Reading from the N-terminus, the 480-residue chain is Protein nucleotidyltransferase YdiU (480 aa).

The ATP site is built by glycine 86, glycine 88, arginine 89, lysine 109, aspartate 121, glycine 122, arginine 172, and arginine 179. Aspartate 248 (proton acceptor) is an active-site residue. 2 residues coordinate Mg(2+): asparagine 249 and aspartate 258. Aspartate 258 contacts ATP.

The protein belongs to the SELO family. Mg(2+) is required as a cofactor. The cofactor is Mn(2+).

It carries out the reaction L-seryl-[protein] + ATP = 3-O-(5'-adenylyl)-L-seryl-[protein] + diphosphate. The catalysed reaction is L-threonyl-[protein] + ATP = 3-O-(5'-adenylyl)-L-threonyl-[protein] + diphosphate. It catalyses the reaction L-tyrosyl-[protein] + ATP = O-(5'-adenylyl)-L-tyrosyl-[protein] + diphosphate. The enzyme catalyses L-histidyl-[protein] + UTP = N(tele)-(5'-uridylyl)-L-histidyl-[protein] + diphosphate. It carries out the reaction L-seryl-[protein] + UTP = O-(5'-uridylyl)-L-seryl-[protein] + diphosphate. The catalysed reaction is L-tyrosyl-[protein] + UTP = O-(5'-uridylyl)-L-tyrosyl-[protein] + diphosphate. Nucleotidyltransferase involved in the post-translational modification of proteins. It can catalyze the addition of adenosine monophosphate (AMP) or uridine monophosphate (UMP) to a protein, resulting in modifications known as AMPylation and UMPylation. This is Protein nucleotidyltransferase YdiU from Enterobacter sp. (strain 638).